The sequence spans 665 residues: Succinate dehydrogenase [ubiquinone] flavoprotein subunit A, mitochondrial (665 aa).

The transit peptide at 1–45 (MALLKVAPSRLLSRALQLASRVQNCTPTVTTARRNFHFTVYGRKD) directs the protein to the mitochondrion. Ala-72, Ala-75, Thr-94, Lys-95, and Ser-101 together coordinate FAD. His-102 carries the post-translational modification Tele-8alpha-FAD histidine. FAD-binding residues include Thr-103, Gly-108, Ala-224, and Asp-278. Residues His-299, Arg-343, and His-410 each contribute to the oxaloacetate site. Arg-343 (proton acceptor) is an active-site residue. Residue Glu-443 coordinates FAD. The oxaloacetate site is built by Arg-454 and Ala-457. Residues Ser-459 and Leu-460 each contribute to the FAD site.

It belongs to the FAD-dependent oxidoreductase 2 family. FRD/SDH subfamily. As to quaternary structure, component of complex II composed of four subunits: a flavoprotein (FP), an iron-sulfur protein (IP), and a cytochrome b composed of a large and a small subunit. FAD is required as a cofactor.

It localises to the mitochondrion inner membrane. The catalysed reaction is a ubiquinone + succinate = a ubiquinol + fumarate. The enzyme catalyses (R)-malate + a quinone = enol-oxaloacetate + a quinol. It carries out the reaction (S)-malate + a quinone = enol-oxaloacetate + a quinol. It participates in carbohydrate metabolism; tricarboxylic acid cycle; fumarate from succinate (eukaryal route): step 1/1. Enol-oxaloacetate inhibits the succinate dehydrogenase activity. Flavoprotein (FP) subunit of succinate dehydrogenase (SDH) that is involved in complex II of the mitochondrial electron transport chain and is responsible for transferring electrons from succinate to ubiquinone (coenzyme Q). SDH also oxidizes malate to the non-canonical enol form of oxaloacetate, enol-oxaloacetate. Enol-oxaloacetate, which is a potent inhibitor of the succinate dehydrogenase activity, is further isomerized into keto-oxaloacetate. This Xenopus laevis (African clawed frog) protein is Succinate dehydrogenase [ubiquinone] flavoprotein subunit A, mitochondrial (sdha-a).